The primary structure comprises 307 residues: Myeloid-associated differentiation marker-like protein 2 (307 aa).

MARVEL domains lie at 17-154 (AVTS…ARPG) and 159-303 (YMAT…RIRF). A run of 7 helical transmembrane segments spans residues 53-73 (FCVA…ACEF), 90-110 (AFAM…PLYF), 129-149 (LAAS…VALT), 163-183 (VSGL…GALV), 198-218 (VAVY…SVLG), 232-252 (VVYT…WPVF), and 278-298 (LVVA…LAYS).

This sequence belongs to the MAL family.

The protein resides in the membrane. This chain is Myeloid-associated differentiation marker-like protein 2 (MYADML2), found in Bos taurus (Bovine).